The following is a 157-amino-acid chain: Ribonuclease H (157 aa).

In terms of domain architecture, RNase H type-1 spans 1–146; it reads MPDLFAYTDG…ADELARAGMA (146 aa). Residues Asp-9, Glu-52, Asp-74, and Asp-138 each contribute to the Mg(2+) site.

This sequence belongs to the RNase H family. In terms of assembly, monomer. Requires Mg(2+) as cofactor.

The protein resides in the cytoplasm. The catalysed reaction is Endonucleolytic cleavage to 5'-phosphomonoester.. Endonuclease that specifically degrades the RNA of RNA-DNA hybrids. The chain is Ribonuclease H from Ruegeria sp. (strain TM1040) (Silicibacter sp.).